Consider the following 277-residue polypeptide: Phosphonates import ATP-binding protein PhnC 2 (277 aa).

Positions 3-251 (ISLNGISVQH…LLQALYAQHL (249 aa)) constitute an ABC transporter domain. 40–47 (GPSGAGKT) lines the ATP pocket.

It belongs to the ABC transporter superfamily. Phosphonates importer (TC 3.A.1.9.1) family. The complex is composed of two ATP-binding proteins (PhnC), two transmembrane proteins (PhnE) and a solute-binding protein (PhnD).

It is found in the cell inner membrane. It catalyses the reaction phosphonate(out) + ATP + H2O = phosphonate(in) + ADP + phosphate + H(+). Its function is as follows. Part of the ABC transporter complex PhnCDE involved in phosphonates import. Responsible for energy coupling to the transport system. The sequence is that of Phosphonates import ATP-binding protein PhnC 2 from Albidiferax ferrireducens (strain ATCC BAA-621 / DSM 15236 / T118) (Rhodoferax ferrireducens).